Consider the following 328-residue polypeptide: Malate dehydrogenase (328 aa).

11–17 (GAAGQIG) is a binding site for NAD(+). Positions 92 and 98 each coordinate substrate. Residues N105, Q112, and 129–131 (TGN) each bind NAD(+). N131 and R162 together coordinate substrate. The active-site Proton acceptor is H187.

This sequence belongs to the LDH/MDH superfamily. MDH type 2 family.

The catalysed reaction is (S)-malate + NAD(+) = oxaloacetate + NADH + H(+). Catalyzes the reversible oxidation of malate to oxaloacetate. The polypeptide is Malate dehydrogenase (Paenarthrobacter aurescens (strain TC1)).